Here is a 51-residue protein sequence, read N- to C-terminus: uncharacterized protein (51 aa).

The interval 1–42 (MKMKTNKYMNMVRPAPPRRADPEGVRDPSTMGGGPNPFLRRS) is disordered.

The protein resides in the mitochondrion. This is an uncharacterized protein from Saccharomyces cerevisiae (strain ATCC 204508 / S288c) (Baker's yeast).